Here is a 358-residue protein sequence, read N- to C-terminus: 3-isopropylmalate dehydrogenase (358 aa).

77 to 90 (GPKWTNLPPDQQPE) provides a ligand contact to NAD(+). Residues Arg98, Arg108, Arg137, and Asp226 each contribute to the substrate site. The Mg(2+) site is built by Asp226, Asp250, and Asp254. Residue 284–296 (GSAPDIAGKGIAN) participates in NAD(+) binding.

This sequence belongs to the isocitrate and isopropylmalate dehydrogenases family. LeuB type 1 subfamily. In terms of assembly, homodimer. It depends on Mg(2+) as a cofactor. Requires Mn(2+) as cofactor.

The protein localises to the cytoplasm. It carries out the reaction (2R,3S)-3-isopropylmalate + NAD(+) = 4-methyl-2-oxopentanoate + CO2 + NADH. Its pathway is amino-acid biosynthesis; L-leucine biosynthesis; L-leucine from 3-methyl-2-oxobutanoate: step 3/4. Catalyzes the oxidation of 3-carboxy-2-hydroxy-4-methylpentanoate (3-isopropylmalate) to 3-carboxy-4-methyl-2-oxopentanoate. The product decarboxylates to 4-methyl-2 oxopentanoate. This is 3-isopropylmalate dehydrogenase from Haemophilus influenzae (strain 86-028NP).